The chain runs to 383 residues: ATP phosphoribosyltransferase regulatory subunit (383 aa).

The protein belongs to the class-II aminoacyl-tRNA synthetase family. HisZ subfamily. In terms of assembly, heteromultimer composed of HisG and HisZ subunits.

Its subcellular location is the cytoplasm. It functions in the pathway amino-acid biosynthesis; L-histidine biosynthesis; L-histidine from 5-phospho-alpha-D-ribose 1-diphosphate: step 1/9. Required for the first step of histidine biosynthesis. May allow the feedback regulation of ATP phosphoribosyltransferase activity by histidine. The polypeptide is ATP phosphoribosyltransferase regulatory subunit (Chromobacterium violaceum (strain ATCC 12472 / DSM 30191 / JCM 1249 / CCUG 213 / NBRC 12614 / NCIMB 9131 / NCTC 9757 / MK)).